The chain runs to 276 residues: MAWRALHPLLLLLLLFPGSQAQSKAQVLQSVAGQTLTVRCQYPPTGSLYEKKGWCKEASALVCIRLVTSSKPRTMAWTSRFTIWDDPDAGFFTVTMTDLREEDSGHYWCRIYRPSDNSVSKSVRFYLVVSPASASTQTSWTPRDLVSSQTQTQSCVPPTAGARQAPESPSTIPVPSQPQNSTLRPGPAAPIALVPVFCGLLVAKSLVLSALLVWWGDIWWKTMMELRSLDTQKATCHLQQVTDLPWTSVSSPVEREILYHTVARTKISDDDDEHTL.

Residues 1 to 21 (MAWRALHPLLLLLLLFPGSQA) form the signal peptide. The Ig-like domain occupies 22–120 (QSKAQVLQSV…IYRPSDNSVS (99 aa)). The Extracellular segment spans residues 22 to 192 (QSKAQVLQSV…LRPGPAAPIA (171 aa)). 2 cysteine pairs are disulfide-bonded: C40–C109 and C55–C63. Composition is skewed to polar residues over residues 138–156 (TSWT…QSCV) and 167–183 (ESPS…NSTL). Residues 138 to 184 (TSWTPRDLVSSQTQTQSCVPPTAGARQAPESPSTIPVPSQPQNSTLR) form a disordered region. The N-linked (GlcNAc...) asparagine glycan is linked to N180. The helical transmembrane segment at 193–213 (LVPVFCGLLVAKSLVLSALLV) threads the bilayer. At 214–276 (WWGDIWWKTM…ISDDDDEHTL (63 aa)) the chain is on the cytoplasmic side.

It belongs to the natural cytotoxicity receptor (NCR) family. Interacts with TYROBP/DAP12. Interacts with KMT2E isoform NKp44L. Selectively expressed by activated NK cells and by in vitro cultured (i.e. activated) TCRg/d lymphoid cells.

It localises to the cell membrane. Its function is as follows. Cytotoxicity-activating receptor that may contribute to the increased efficiency of activated natural killer (NK) cells to mediate tumor cell lysis. This Homo sapiens (Human) protein is Natural cytotoxicity triggering receptor 2 (NCR2).